We begin with the raw amino-acid sequence, 246 residues long: Probable site-specific recombinase in afa region (246 aa).

The 186-residue stretch at 40-225 (ATPAYLLAPE…FALDMAATLA (186 aa)) folds into the Tyr recombinase domain. Active-site residues include R75, K102, H177, R180, and H203. The active-site O-(3'-phospho-DNA)-tyrosine intermediate is Y212.

This sequence belongs to the 'phage' integrase family.

The sequence is that of Probable site-specific recombinase in afa region (int) from Escherichia coli.